The following is a 424-amino-acid chain: CinA-like protein (424 aa).

It belongs to the CinA family.

This is CinA-like protein from Shewanella frigidimarina (strain NCIMB 400).